Consider the following 545-residue polypeptide: Chaperonin GroEL (545 aa).

ATP-binding positions include 29 to 32, Lys50, 86 to 90, Gly414, 477 to 479, and Asp493; these read TMGP, DGTTT, and DAA.

Belongs to the chaperonin (HSP60) family. In terms of assembly, forms a cylinder of 14 subunits composed of two heptameric rings stacked back-to-back. Interacts with the co-chaperonin GroES.

The protein resides in the cytoplasm. It carries out the reaction ATP + H2O + a folded polypeptide = ADP + phosphate + an unfolded polypeptide.. Its function is as follows. Together with its co-chaperonin GroES, plays an essential role in assisting protein folding. The GroEL-GroES system forms a nano-cage that allows encapsulation of the non-native substrate proteins and provides a physical environment optimized to promote and accelerate protein folding. The sequence is that of Chaperonin GroEL from Campylobacter jejuni subsp. jejuni serotype O:6 (strain 81116 / NCTC 11828).